Here is a 323-residue protein sequence, read N- to C-terminus: MEFPFDVDALFPERITVLDQHLRPPARRPGTTTPARVDLQQQIMTIIDELGKASAKAQNLSAPITSASRMQSNRHVVYILKDSSGRPAGKGAIIGFIKVGYKKLFVLDDREAHNEVEPLCILDFYIHESVQRHGHGRELFQYMLQKERVEPHQLAIDRPSQKLLKFLNKHYNLETTVPQVNNFVIFEGFFAHQHRPPAPSLRATRHSRAAAVDPTPTAPARKLPPKRAEGDIKPYSSSDREFLKVAVEPPWPLNRAPRRATPPAHPPPRSSSLGNSPERGPLRPFVPEQELLRSLRLCPPHPTARLLLAADPGGSPAQRRRTR.

One can recognise an N-acetyltransferase domain in the interval 1 to 190 (MEFPFDVDAL…NNFVIFEGFF (190 aa)). Lys-56 is subject to N6-acetyllysine; by autocatalysis. 124–137 (FYIHESVQRHGHGR) provides a ligand contact to acetyl-CoA. Lys-146 is modified (N6-acetyllysine; by autocatalysis). Residue 160–169 (SQKLLKFLNK) coordinates acetyl-CoA. Residues 196–239 (PPAPSLRATRHSRAAAVDPTPTAPARKLPPKRAEGDIKPYSSSD) are disordered. Low complexity predominate over residues 209–220 (AAAVDPTPTAPA). Over residues 226 to 239 (KRAEGDIKPYSSSD) the composition is skewed to basic and acidic residues. Lys-233 and Lys-244 each carry N6-acetyllysine; by autocatalysis. Residues 252–287 (PLNRAPRRATPPAHPPPRSSSLGNSPERGPLRPFVP) are disordered. A phosphoserine mark is found at Ser-272 and Ser-276. The residue at position 305 (Arg-305) is an Asymmetric dimethylarginine. At Ser-315 the chain carries Phosphoserine. Arg-323 is modified (omega-N-methylarginine).

The protein belongs to the acetyltransferase ATAT1 family. As to quaternary structure, component of the BBSome complex. Interacts with AP2 alpha-adaptins, including AP2A2, but not with AP1 gamma-adaptin (AP1G1/AP1G2); this interaction is required for efficient alpha-tubulin acetylation, hence clathrin-coated pits are sites of microtubule acetylation. In terms of processing, autoacetylation strongly increases tubulin acetylation.

The protein resides in the cytoplasm. It localises to the membrane. Its subcellular location is the clathrin-coated pit. It is found in the cell junction. The protein localises to the focal adhesion. The protein resides in the cell projection. It localises to the axon. Its subcellular location is the cytoskeleton. It is found in the spindle. It carries out the reaction L-lysyl-[alpha-tubulin] + acetyl-CoA = N(6)-acetyl-L-lysyl-[alpha-tubulin] + CoA + H(+). In terms of biological role, specifically acetylates 'Lys-40' in alpha-tubulin on the lumenal side of microtubules. Promotes microtubule destabilization and accelerates microtubule dynamics; this activity may be independent of acetylation activity. Acetylates alpha-tubulin with a slow enzymatic rate, due to a catalytic site that is not optimized for acetyl transfer. Enters the microtubule through each end and diffuses quickly throughout the lumen of microtubules. Acetylates only long/old microtubules because of its slow acetylation rate since it does not have time to act on dynamically unstable microtubules before the enzyme is released. Required for normal sperm flagellar function. Promotes directional cell locomotion and chemotaxis, through AP2A2-dependent acetylation of alpha-tubulin at clathrin-coated pits that are concentrated at the leading edge of migrating cells. May facilitate primary cilium assembly. The polypeptide is Alpha-tubulin N-acetyltransferase 1 (Macaca mulatta (Rhesus macaque)).